The sequence spans 124 residues: Small ribosomal subunit protein uS12 (124 aa).

The residue at position 89 (D89) is a 3-methylthioaspartic acid.

Belongs to the universal ribosomal protein uS12 family. In terms of assembly, part of the 30S ribosomal subunit. Contacts proteins S8 and S17. May interact with IF1 in the 30S initiation complex.

With S4 and S5 plays an important role in translational accuracy. Its function is as follows. Interacts with and stabilizes bases of the 16S rRNA that are involved in tRNA selection in the A site and with the mRNA backbone. Located at the interface of the 30S and 50S subunits, it traverses the body of the 30S subunit contacting proteins on the other side and probably holding the rRNA structure together. The combined cluster of proteins S8, S12 and S17 appears to hold together the shoulder and platform of the 30S subunit. The protein is Small ribosomal subunit protein uS12 of Glaesserella parasuis serovar 5 (strain SH0165) (Haemophilus parasuis).